The chain runs to 431 residues: Glycerol-3-phosphate dehydrogenase [NAD(P)+] (431 aa).

Residues 1–19 (MTSANDKSTDTNVDSTQAE) show a composition bias toward polar residues. The interval 1-25 (MTSANDKSTDTNVDSTQAEQKMAEK) is disordered. S79, F80, R100, and K173 together coordinate NADPH. 2 residues coordinate sn-glycerol 3-phosphate: K173 and G201. A205 lines the NADPH pocket. Positions 256, 309, 319, 320, and 321 each coordinate sn-glycerol 3-phosphate. K256 (proton acceptor) is an active-site residue. R320 lines the NADPH pocket. Residue E346 participates in NADPH binding.

It belongs to the NAD-dependent glycerol-3-phosphate dehydrogenase family.

The protein resides in the cytoplasm. It catalyses the reaction sn-glycerol 3-phosphate + NAD(+) = dihydroxyacetone phosphate + NADH + H(+). The catalysed reaction is sn-glycerol 3-phosphate + NADP(+) = dihydroxyacetone phosphate + NADPH + H(+). It participates in membrane lipid metabolism; glycerophospholipid metabolism. Functionally, catalyzes the reduction of the glycolytic intermediate dihydroxyacetone phosphate (DHAP) to sn-glycerol 3-phosphate (G3P), the key precursor for phospholipid synthesis. The chain is Glycerol-3-phosphate dehydrogenase [NAD(P)+] from Psychrobacter arcticus (strain DSM 17307 / VKM B-2377 / 273-4).